The chain runs to 185 residues: Threonylcarbamoyl-AMP synthase (185 aa).

In terms of domain architecture, YrdC-like spans 4 to 185 (SWRVQQAARE…LATGEVVRPG (182 aa)).

Belongs to the SUA5 family. TsaC subfamily.

The protein resides in the cytoplasm. It catalyses the reaction L-threonine + hydrogencarbonate + ATP = L-threonylcarbamoyladenylate + diphosphate + H2O. Required for the formation of a threonylcarbamoyl group on adenosine at position 37 (t(6)A37) in tRNAs that read codons beginning with adenine. Catalyzes the conversion of L-threonine, HCO(3)(-)/CO(2) and ATP to give threonylcarbamoyl-AMP (TC-AMP) as the acyladenylate intermediate, with the release of diphosphate. The protein is Threonylcarbamoyl-AMP synthase of Pseudomonas entomophila (strain L48).